Here is a 225-residue protein sequence, read N- to C-terminus: Uracil-DNA glycosylase (225 aa).

Asp-65 functions as the Proton acceptor in the catalytic mechanism.

Belongs to the uracil-DNA glycosylase (UDG) superfamily. UNG family.

Its subcellular location is the cytoplasm. The catalysed reaction is Hydrolyzes single-stranded DNA or mismatched double-stranded DNA and polynucleotides, releasing free uracil.. In terms of biological role, excises uracil residues from the DNA which can arise as a result of misincorporation of dUMP residues by DNA polymerase or due to deamination of cytosine. This is Uracil-DNA glycosylase from Bacillus anthracis (strain A0248).